A 212-amino-acid polypeptide reads, in one-letter code: Large ribosomal subunit protein uL3 (212 aa).

Q153 carries the N5-methylglutamine modification.

The protein belongs to the universal ribosomal protein uL3 family. As to quaternary structure, part of the 50S ribosomal subunit. Forms a cluster with proteins L14 and L19. Post-translationally, methylated by PrmB.

In terms of biological role, one of the primary rRNA binding proteins, it binds directly near the 3'-end of the 23S rRNA, where it nucleates assembly of the 50S subunit. This is Large ribosomal subunit protein uL3 from Idiomarina loihiensis (strain ATCC BAA-735 / DSM 15497 / L2-TR).